A 227-amino-acid polypeptide reads, in one-letter code: Germin-like protein subfamily 1 member 3 (227 aa).

The first 24 residues, 1–24 (MKYPFQCFLAKIILLALASSFVSC), serve as a signal peptide directing secretion. An intrachain disulfide couples cysteine 34 to cysteine 50. The 149-residue stretch at 64–212 (SGLNIPGNTN…AFALDINIVR (149 aa)) folds into the Cupin type-1 domain. The Mn(2+) site is built by histidine 109, histidine 111, and glutamate 116. Asparagine 136 carries N-linked (GlcNAc...) asparagine glycosylation. A Mn(2+)-binding site is contributed by histidine 160.

This sequence belongs to the germin family. As to quaternary structure, oligomer (believed to be a pentamer but probably hexamer).

Its subcellular location is the secreted. It is found in the extracellular space. The protein localises to the apoplast. May play a role in plant defense. Probably has no oxalate oxidase activity even if the active site is conserved. The protein is Germin-like protein subfamily 1 member 3 of Arabidopsis thaliana (Mouse-ear cress).